The chain runs to 141 residues: Large ribosomal subunit protein uL11 (141 aa).

The protein belongs to the universal ribosomal protein uL11 family. In terms of assembly, part of the ribosomal stalk of the 50S ribosomal subunit. Interacts with L10 and the large rRNA to form the base of the stalk. L10 forms an elongated spine to which L12 dimers bind in a sequential fashion forming a multimeric L10(L12)X complex. In terms of processing, one or more lysine residues are methylated.

Its function is as follows. Forms part of the ribosomal stalk which helps the ribosome interact with GTP-bound translation factors. This is Large ribosomal subunit protein uL11 from Limosilactobacillus reuteri (strain DSM 20016) (Lactobacillus reuteri).